The primary structure comprises 267 residues: Dolichol-phosphate mannosyltransferase (267 aa).

At S2 the chain carries N-acetylserine. Over 2 to 238 the chain is Cytoplasmic; it reads SIEYSVIVPA…QQLKELYVFK (237 aa). Residues P10, Y12, E14, V42, D44, D95, A96, D97, Q99, and R122 each coordinate GDP-alpha-D-mannose. Mg(2+) contacts are provided by D97 and Q99. Mn(2+)-binding residues include D97 and Q99. Position 141 is a phosphoserine; by PKA (S141). GDP-alpha-D-mannose is bound by residues K183, R212, and K218. The helical; Anchor for type IV membrane protein transmembrane segment at 239-259 threads the bilayer; it reads FGANNLILFITFWSILFFYVC. The Lumenal segment spans residues 260 to 267; it reads YQLYHLVF.

This sequence belongs to the glycosyltransferase 2 family. Interacts with the C-terminus of SAC1, thereby sequestering it to the endoplasmic reticulum in exponentially growing cells. Under nutrient limitation conditions, this interaction is rapidly abolished. Requires Mg(2+) as cofactor. Mn(2+) serves as cofactor. It depends on Ca(2+) as a cofactor.

The protein localises to the endoplasmic reticulum membrane. The catalysed reaction is a di-trans,poly-cis-dolichyl phosphate + GDP-alpha-D-mannose = a di-trans,poly-cis-dolichyl beta-D-mannosyl phosphate + GDP. Its pathway is protein modification; protein glycosylation. With respect to regulation, inhibited by acetylsalicylic acid (aspirin). Functionally, transfers mannose from GDP-mannose to dolichol monophosphate to form dolichol phosphate mannose (Dol-P-Man) which is the mannosyl donor in pathways leading to N-glycosylation, glycosyl phosphatidylinositol membrane anchoring, and O-mannosylation of proteins. This Saccharomyces cerevisiae (strain ATCC 204508 / S288c) (Baker's yeast) protein is Dolichol-phosphate mannosyltransferase.